A 399-amino-acid chain; its full sequence is uncharacterized protein (399 aa).

10 consecutive transmembrane segments (helical) span residues 6-26 (HLTF…LIIP), 27-47 (KGYN…FIPL), 60-80 (LIFS…INKD), 111-131 (ILYA…FQKF), 147-167 (MGNI…HFFI), 173-193 (STLF…LSGA), 195-215 (GGWI…KEFI), 220-240 (IITL…SPKF), 328-348 (GLVG…YFIK), and 362-382 (ILGI…SFLA).

The protein resides in the cell membrane. This is an uncharacterized protein from Haemophilus influenzae (strain ATCC 51907 / DSM 11121 / KW20 / Rd).